Consider the following 196-residue polypeptide: Peptide deformylase (196 aa).

Fe cation is bound by residues Cys-105 and His-147. Residue Glu-148 is part of the active site. His-151 serves as a coordination point for Fe cation.

Belongs to the polypeptide deformylase family. Fe(2+) serves as cofactor.

It carries out the reaction N-terminal N-formyl-L-methionyl-[peptide] + H2O = N-terminal L-methionyl-[peptide] + formate. Removes the formyl group from the N-terminal Met of newly synthesized proteins. Requires at least a dipeptide for an efficient rate of reaction. N-terminal L-methionine is a prerequisite for activity but the enzyme has broad specificity at other positions. The sequence is that of Peptide deformylase from Flavobacterium johnsoniae (strain ATCC 17061 / DSM 2064 / JCM 8514 / BCRC 14874 / CCUG 350202 / NBRC 14942 / NCIMB 11054 / UW101) (Cytophaga johnsonae).